The following is a 169-amino-acid chain: Endoribonuclease YbeY (169 aa).

Zn(2+) contacts are provided by His-126, His-130, and His-136.

Belongs to the endoribonuclease YbeY family. Zn(2+) serves as cofactor.

Its subcellular location is the cytoplasm. Functionally, single strand-specific metallo-endoribonuclease involved in late-stage 70S ribosome quality control and in maturation of the 3' terminus of the 16S rRNA. This Bradyrhizobium sp. (strain BTAi1 / ATCC BAA-1182) protein is Endoribonuclease YbeY.